The primary structure comprises 151 residues: UPF0756 membrane protein Aflv_0503 (151 aa).

4 consecutive transmembrane segments (helical) span residues 4–24, 52–72, 85–105, and 115–135; these read FIFL…SLII, LGVT…KIGF, WIAM…VALL, and LVLG…GPLI.

Belongs to the UPF0756 family.

It localises to the cell membrane. This is UPF0756 membrane protein Aflv_0503 from Anoxybacillus flavithermus (strain DSM 21510 / WK1).